Reading from the N-terminus, the 413-residue chain is Divalent metal cation transporter MntH (413 aa).

Topologically, residues 1–19 (MTDNRVENSSGRAARKLRL) are cytoplasmic. A helical transmembrane segment spans residues 20 to 39 (ALMGPAFIAAIGYIDPGNFA). Residues 40–51 (TNIQAGASFGYQ) are Periplasmic-facing. Residues 52–71 (LLWVVVWANLMAMLIQILSA) form a helical membrane-spanning segment. The Cytoplasmic portion of the chain corresponds to 72–95 (KLGIATGKNLAEQIRDHYPRPVVW). Residues 96–118 (FYWVQAEIIAMATDLAEFIGAAI) form a helical membrane-spanning segment. The Periplasmic portion of the chain corresponds to 119–125 (GFKLILG). A helical membrane pass occupies residues 126–145 (VSLLQGAVLTGIATFLILML). The Cytoplasmic portion of the chain corresponds to 146–155 (QRRGQKPLEK). Residues 156 to 175 (VIGGLLLFVAAAYIVELFFS) form a helical membrane-spanning segment. The Periplasmic portion of the chain corresponds to 176 to 196 (QPDMAQLGKGMVIPALPNPEA). A helical membrane pass occupies residues 197–220 (VFLAAGVLGATIMPHVIYLHSSLT). The Cytoplasmic segment spans residues 221 to 238 (QHLHGGTRQQRYSATKWD). A helical membrane pass occupies residues 239–258 (VAIAMTIAGFVNLAMMATAA). Topologically, residues 259–276 (AAFHFSGHTGIADLDQAY) are periplasmic. Residues 277-297 (LTLEPLLSHAAATVFGLSLVA) traverse the membrane as a helical segment. Topologically, residues 298-327 (AGLSSTVVGTLAGQVVMQGFVRFHIPLWVR) are cytoplasmic. Residues 328 to 344 (RTITMLPSFIVILMGLD) form a helical membrane-spanning segment. The Periplasmic portion of the chain corresponds to 345-350 (PTRILV). A helical membrane pass occupies residues 351–370 (MSQVLLSFGIALALVPLLIF). At 371–387 (TSNATLMGELVNTRRVK) the chain is on the cytoplasmic side. A helical transmembrane segment spans residues 388-406 (QVGWIIVVLVVALNIWLLV). Topologically, residues 407-413 (GTVMGLS) are periplasmic.

This sequence belongs to the NRAMP family.

The protein localises to the cell inner membrane. H(+)-stimulated, divalent metal cation uptake system. This chain is Divalent metal cation transporter MntH, found in Salmonella paratyphi C (strain RKS4594).